The chain runs to 2481 residues: MSTSSQSFVAGRPASMASPSQSHRFCGPSATASGGGSFDTLNRVIADLCSRGNPKEGAPLAFRKHVEEAVRDLSGEASSRFMEQLYDRIANLIESTDVAENMGALRAIDELTEIGFGENATKVSRFAGYMRTVFELKRDPEILVLASRVLGHLARAGGAMTSDEVEFQMKTAFDWLRVDRVEYRRFAAVLILKEMAENASTVFNVHVPEFVDAIWVALRDPQLQVRERAVEALRACLRVIEKRETRWRVQWYYRMFEATQDGLGRNAPVHSIHGSLLAVGELLRNTGEFMMSRYREVAEIVLRYLEHRDRLVRLSITSLLPRIAHFLRDRFVTNYLTICMNHILTVLRIPAERASGFIALGEMAGALDGELIHYLPTIMSHLRDAIAPRKGRPLLEAVACVGNIAKAMGSTVETHVRDLLDVMFSSSLSSTLVDALDQITISIPSLLPTVQDRLLDCISLVLSKSHYSQAKPPVTIVRGSTVGMAPQSSDPSCSAQVQLALQTLARFNFKGHDLLEFARESVVVYLDDEDAATRKDAALCCCRLIANSLSGITQFGSSRSTRAGGRRRRLVEEIVEKLLRTAVADADVTVRKSIFVALFGNQCFDDYLAQADSLTAIFASLNDEDLDVREYAISVAGRLSEKNPAYVLPALRRHLIQLLTYLELSADNKCREESAKLLGCLVRNCERLILPYVAPVQKALVARLSEGTGVNANNNIVTGVLVTVGDLARVGGLAMRQYIPELMPLIVEALMDGAAVAKREVAVSTLGQVVQSTGYVVTPYKEYPLLLGLLLKLLKGDLVWSTRREVLKVLGIMGALDPHVHKRNQQSLSGSHGEVPRGTGDSGQPIPSIDELPVELRPSFATSEDYYSTVAINSLMRILRDASLLSYHKRVVRSLMIIFKSMGLGCVPYLPKVLPELFHTVRTSDENLKDFITWGLGTLVSIVRQHIRKYLPELLSLVSELWSSFTLPGPIRPSRGLPVLHLLEHLCLALNDEFRTYLPVILPCFIQVLGDAERFNDYTYVPDILHTLEVFGGTLDEHMHLLLPALIRLFKVDAPVAIRRDAIKTLTRVIPCVQVTGHISALVHHLKLVLDGKNDELRKDAVDALCCLAHALGEDFTIFIESIHKLLLKHRLRHKEFEEIHARWRRREPLIVATTATQQLSRRLPVEVIRDPVIENEIDPFEEGTDRNHQVNDGRLRTAGEASQRSTKEDWEEWMRHFSIELLKESPSPALRTCAKLAQLQPFVGRELFAAGFVSCWAQLNESSQKQLVRSLEMAFSSPNIPPEILATLLNLAEFMEHDEKPLPIDIRLLGALAEKCRVFAKALHYKEMEFEGPRSKRMDANPVAVVEALIHINNQLHQHEAAVGILTYAQQHLDVQLKESWYEKLQRWDDALKAYTLKASQTTNPHLVLEATLGQMRCLAALARWEELNNLCKEYWSPAEPSARLEMAPMAAQAAWNMGEWDQMAEYVSRLDDGDETKLRGLASPVSSGDGSSNGTFFRAVLLVRRAKYDEAREYVERARKCLATELAALVLESYERAYSNMVRVQQLSELEEVIEYYTLPVGNTIAEERRALIRNMWTQRIQGSKRNVEVWQALLAVRALVLPPTEDVETWLKFASLCRKSGRISQAKSTLLKLLPFDPEVSPENMQYHGPPQVMLGYLKYQWSLGEERKRKEAFTKLQILTRELSSVPHSQSDILASMVSSKGANVPLLARVNLKLGTWQWALSSGLNDGSIQEIRDAFDKSTCYAPKWAKAWHTWALFNTAVMSHYISRGQIASQYVVSAVTGYFYSIACAANAKGVDDSLQDILRLLTLWFNHGATADVQTALKTGFSHVNINTWLVVLPQIIARIHSNNRAVRELIQSLLIRIGENHPQALMYPLLVACKSISNLRRAAAQEVVDKVRQHSGALVDQAQLVSHELIRVAILWHEMWHEALEEASRLYFGEHNIEGMLKVLEPLHDMLDEGVKKDSTTIQERAFIEAYRHELKEAHECCCNYKITGKDAELTQAWDLYYHVFKRIDKQLASLTTLDLESVSPELLLCRDLELAVPGTYRADAPVVTISSFSRQLVVITSKQRPRKLTIHGNDGEDYAFLLKGHEDLRQDERVMQLFGLVNTLLENSRKTAEKDLSIQRYSVIPLSPNSGLIGWVPNCDTLHHLIREHRDARKIILNQENKHMLSFAPDYDNLPLIAKVEVFEYALENTEGNDLSRVLWLKSRSSEVWLERRTNYTRSLAVMSMVGYILGLGDRHPSNLMLHRYSGKILHIDFGDCFEASMNREKFPEKVPFRLTRMLVKAMEVSGIEGNFRSTCENVMQVLRTNKDSVMAMMEAFVHDPLINWRLFNFNEVPQLALLGNNNPNAPADVEPDEEDEDPADIDLPQPQRSTREKEILQAVNMLGDANEVLNERAVVVMARMSHKLTGRDFSSSAIPSNPIADHNNLLGGDSHEVEHGLSVKVQVQKLINQATSHENLCQNYVGWCPFW.

Positions 1-31 are disordered; that stretch reads MSTSSQSFVAGRPASMASPSQSHRFCGPSAT. HEAT repeat units follow at residues 205 to 242, 292 to 329, 373 to 410, 434 to 471, 569 to 607, 608 to 645, 737 to 775, and 781 to 819; these read VHVP…VIEK, SRYR…FLRD, HYLP…AMGS, DALD…SQAK, RLVE…FDDY, LAQA…KNPA, QYIP…STGY, and KEYP…LDPH. A disordered region spans residues 823–847; that stretch reads RNQQSLSGSHGEVPRGTGDSGQPIP. HEAT repeat units lie at residues 866-904, 908-945, 952-992, 996-1036, 1037-1075, and 1077-1114; these read YYST…SMGL, PYLP…IVRQ, PELL…ALND, TYLP…GTLD, EHMH…CVQV, and GHIS…ALGE. The interval 1179 to 1204 is disordered; that stretch reads DPFEEGTDRNHQVNDGRLRTAGEASQ. Residues 1184–1198 are compositionally biased toward basic and acidic residues; sequence GTDRNHQVNDGRLRT. An FAT domain is found at 1309–1887; that stretch reads LLGALAEKCR…MYPLLVACKS (579 aa). 2 short sequence motifs (nuclear localization signal) span residues 1505–1512 and 2075–2080; these read VRRAKYDE and KQRPRK. Residues 2065–2378 enclose the PI3K/PI4K catalytic domain; it reads FSRQLVVITS…DEDPADIDLP (314 aa). The tract at residues 2071-2077 is G-loop; the sequence is VITSKQR. Residues 2244 to 2252 are catalytic loop; sequence GLGDRHPSN. The interval 2264 to 2289 is activation loop; that stretch reads HIDFGDCFEASMNREKFPEKVPFRLT. The disordered stretch occupies residues 2354–2384; that stretch reads NNNPNAPADVEPDEEDEDPADIDLPQPQRST. The segment covering 2363 to 2374 has biased composition (acidic residues); that stretch reads VEPDEEDEDPAD. Ser2424 bears the Phosphoserine mark. An FATC domain is found at 2449–2481; it reads HGLSVKVQVQKLINQATSHENLCQNYVGWCPFW.

It belongs to the PI3/PI4-kinase family. As to quaternary structure, interacts with RAPTOR1 and itself. Interacts with FKBP12 in a rapamycin-dependent manner. Binds to LST8-1. Hyperactivated upon interaction with cauliflower mosaic virus (CaMV) Tav protein. Post-translationally, activated by phosphorylation on Ser-2424 triggered by cauliflower mosaic virus P6 and auxin. As to expression, highly expressed in root meristems, shoot apical meristem (SAM) and floral buds.

The protein localises to the cytoplasm. It localises to the nucleus. It carries out the reaction L-seryl-[protein] + ATP = O-phospho-L-seryl-[protein] + ADP + H(+). The enzyme catalyses L-threonyl-[protein] + ATP = O-phospho-L-threonyl-[protein] + ADP + H(+). With respect to regulation, almost insensitive to rapamycin. Strongly repressed by specific active site inhibitors (asTORis) such as AZD-8055, TORIN2 and WYE-132, and, to a lesser extent, by KU63794, WYE-354 and TORIN1, leading to impaired photoautotrophic growth and abnormally early meristematic cells differentiation. Repression by TORIN1 leads to impaired responses to auxin, including gravitropism. Combined treatment with rapamycin and active-site inhibitors (e.g. Torin1 and AZD-8055) results in synergistic inhibition of activity and plant growth. Inhibition by KU63794 leads to reduced auxin content in root tips. AZD-8055 treatment reduces abscisic acid (ABA) levels. In addition, inhibition by AZD-8055 leads to a strong reduction of watermelon mosaic virus (WMV) infection. Functionally, essential cell growth regulator that controls development from early embryo to seed production. Controls plant growth in environmental stress conditions. Acts through the phosphorylation of downstream effectors that are recruited by the binding partner RAPTOR. Acts by activating transcription, protein synthesis and ribosome biogenesis, and inhibiting mRNA degradation and autophagy. Can phosphorylate TAP46, a regulatory subunit of protein phosphatase 2A that modulates cell growth and survival. Involved in modulating the transition from heterotrophic to photoautotrophic growth by regulating the expression of chloroplast- and photosynthesis-associated genes. Essential for auxin signaling transduction, probably acting in polysomes to maintain the active ATPK1/S6K1 (and thus TIF3H1/eIF3h) phosphorylation status that is critical for translation reinitiation (e.g. uORF-mRNAs loading). Promotes abscisic acid (ABA) biosynthesis. Involved in the regulation of sugar-mediated (e.g. glucose and sucrose) glycolysis- and mitochondrial bioenergetics-dependent root growth promotion. Required for sugar (e.g. glucose) promotion of hypocotyl elongation in the dark, by activating the brassinosteroid pathway and stabilizing BZR1. The regulation of BZR1 degradation is dependent on autophagy. Regulates the expression, phosphorylation and ribosome association of MRFs (e.g. MRF1, MRF3 and MRF4), especially under energy-deficient conditions. In terms of biological role, (Microbial infection) Binding to cauliflower mosaic virus (CaMV) Tav protein is critical for both translation reinitiation and viral fitness. When activated by CaMV P6, promotes CaMV translation by inhibiting cellular autophagy and suppressing both silencing and innate immunity, thus conferring sensitivity to P.syringae. Its function is as follows. (Microbial infection) Required during infection by some potyvirus such as Watermelon mosaic virus (WMV) but not for turnip mosaic virus (TuMV). The sequence is that of Serine/threonine-protein kinase TOR from Arabidopsis thaliana (Mouse-ear cress).